The sequence spans 440 residues: L-gulonolactone oxidase (440 aa).

The FAD-binding PCMH-type domain occupies 17-187; sequence YSCEPELYFE…LNVTIQCVPA (171 aa). His-54 carries the pros-8alpha-FAD histidine modification. The chain crosses the membrane as a helical span at residues 245 to 267; sequence WFWNYAIGYYLLEFLLWISVFVP.

The protein belongs to the oxygen-dependent FAD-linked oxidoreductase family. Requires FAD as cofactor.

It localises to the microsome membrane. The protein resides in the endoplasmic reticulum membrane. It catalyses the reaction L-gulono-1,4-lactone + O2 = L-ascorbate + H2O2 + H(+). Its pathway is cofactor biosynthesis; L-ascorbate biosynthesis via UDP-alpha-D-glucuronate pathway; L-ascorbate from UDP-alpha-D-glucuronate: step 4/4. Its function is as follows. Oxidizes L-gulono-1,4-lactone to hydrogen peroxide and L-xylo-hexulonolactone which spontaneously isomerizes to L-ascorbate. The chain is L-gulonolactone oxidase (GULO) from Scyliorhinus torazame (Cloudy catshark).